A 670-amino-acid polypeptide reads, in one-letter code: Solute carrier organic anion transporter family member 1A5 (670 aa).

Topologically, residues 1 to 20 (MGETEKRVATHEVRCFSKIK) are cytoplasmic. Residues 21–40 (MFLLALTWAYVSKSLSGIYM) traverse the membrane as a helical segment. At 41–59 (NTMLTQIERQFDIPTSIVG) the chain is on the extracellular side. Residues 60–80 (FINGSFEIGNLLLIIFVSYFG) traverse the membrane as a helical segment. The Cytoplasmic portion of the chain corresponds to 81 to 86 (TKLHRP). Residues 87-111 (IMIGVGCVIMGLGCFLMSLPHFLMG) form a helical membrane-spanning segment. Residues 112–155 (RYEYETTISPTSNLSSNSFLCMENRSQTLKPTQDPAECIKEMKS) are Extracellular-facing. Asn124 and Asn135 each carry an N-linked (GlcNAc...) asparagine glycan. The chain crosses the membrane as a helical span at residues 156 to 184 (LMWIYVLVGNIIRGIGETPIMPLGISYIE). Topologically, residues 185–203 (DFAKSENSPLYIGILETGK) are cytoplasmic. The helical transmembrane segment at 204–224 (VFGPIVGLLLGSFCASIYVDT) threads the bilayer. Over 225–242 (GSVNTDDLTITPTDTRWV) the chain is Extracellular. A helical membrane pass occupies residues 243 to 267 (GAWWIGFLICAGVNILSSIPFFFFP). At 268-311 (KTLPKEGLQDDVDGTNNDKEEKHREKAKEENRGITKDFLPFMKS) the chain is on the cytoplasmic side. A helical membrane pass occupies residues 312–333 (LSCNPIYMLLILTSVLQINAFI). Residues 334–353 (NMFTFLPKYLEQQYGKSTAE) lie on the Extracellular side of the membrane. The helical transmembrane segment at 354–377 (VVLLIGVYNLPPICIGYLLIGFIM) threads the bilayer. The Cytoplasmic portion of the chain corresponds to 378-381 (KKFK). A helical transmembrane segment spans residues 382–405 (ITVKKAAYMAFCLSLFEYLLYFLH). Over 406-513 (FMITCDNFPV…PECANKLQYF (108 aa)) the chain is Extracellular. Residues 433–488 (NKVLADCNRGCSCSTNSWDPVCGDNGLAYMSACLAGCKKSVGTGTNMVFQNCSCIR) enclose the Kazal-like domain. Disulfide bonds link Cys439–Cys469, Cys445–Cys465, and Cys454–Cys486. 2 N-linked (GlcNAc...) asparagine glycosylation sites follow: Asn483 and Asn492. Residues 514-536 (LIMSVIGSFIYSITAIPGYMVLL) traverse the membrane as a helical segment. Residues 537–545 (RCIKPEEKS) lie on the Cytoplasmic side of the membrane. The helical transmembrane segment at 546–571 (LGIGLHAFCTRVFAGIPAPIYFGALI) threads the bilayer. At 572-605 (DRTCLHWGTLKCGEPGACRMYNINNFRRIYLVLP) the chain is on the extracellular side. Residues 606–623 (AALRGSSYLPALFILILM) traverse the membrane as a helical segment. At 624–670 (RKFQFPGEIDSSETELAEMKITVKKSECTDVHGSPQVENDGELKTRL) the chain is on the cytoplasmic side.

This sequence belongs to the organo anion transporter (TC 2.A.60) family. Highly expressed in the kidney, moderately abundant in the retina, and even lower in the liver. Expressed (at protein level) in the small intestine. Expressed at lower levels in brain,lung, and retina.

The protein resides in the cell membrane. Its subcellular location is the basal cell membrane. The catalysed reaction is taurocholate(out) = taurocholate(in). It carries out the reaction glycocholate(out) = glycocholate(in). It catalyses the reaction taurochenodeoxycholate(out) = taurochenodeoxycholate(in). The enzyme catalyses tauroursodeoxycholate(out) = tauroursodeoxycholate(in). The catalysed reaction is 3,3',5'-triiodo-L-thyronine(out) = 3,3',5'-triiodo-L-thyronine(in). It carries out the reaction L-thyroxine(out) = L-thyroxine(in). It catalyses the reaction taurodeoxycholate(out) = taurodeoxycholate(in). The enzyme catalyses glycodeoxycholate(out) = glycodeoxycholate(in). The catalysed reaction is glycochenodeoxycholate(out) = glycochenodeoxycholate(in). It carries out the reaction glycoursodeoxycholate(out) = glycoursodeoxycholate(in). It catalyses the reaction estrone 3-sulfate(out) = estrone 3-sulfate(in). The enzyme catalyses prostaglandin E2(out) = prostaglandin E2(in). The catalysed reaction is substance P(out) = substance P(in). Its function is as follows. Na(+)-independent transporter that mediates the cellular uptake of a broad range of organic anions such as the endogenous bile salts cholate and deoxycholate, either in their unconjugated or conjugated forms (taurocholate and glycocholate), estrone 3-sulfate and prostaglandin E2, at the plasma membrane. Responsible for intestinal absorption of bile acids. Capable of thyroid hormone transport (both T3 or 3,3',5'-triiodo-L-thyronine, and T4 or L-tyroxine). Plays roles in blood-brain and -cerebrospinal fluid barrier transport of organic anions and signal mediators, and in hormone uptake by neural cells. May also play a role in the reuptake of neuropeptides such as substance P/TAC1 and vasoactive intestinal peptide/VIP released from retinal neurons. Shows a pH-sensitive substrate specificity which may be ascribed to the protonation state of the binding site and leads to a stimulation of substrate transport in an acidic microenvironment. Hydrogencarbonate/HCO3(-) acts as the probable counteranion that exchanges for organic anions. May contribute to regulate the transport of organic compounds in testis across the blood-testis-barrier. This Rattus norvegicus (Rat) protein is Solute carrier organic anion transporter family member 1A5 (Slco1a5).